The following is a 603-amino-acid chain: Protein Spindly (603 aa).

M1 carries the N-acetylmethionine modification. Residues 1–442 adopt a coiled-coil conformation; it reads MESDVIADLR…LKLKYEPEEK (442 aa). 2 positions are modified to phosphoserine: S513 and S553. Positions 542 to 577 are disordered; sequence ALSERSRNTPNSPRLAAESRLQREVKQGKETASKLE. A compositionally biased stretch (basic and acidic residues) spans 561–577; it reads RLQREVKQGKETASKLE.

This sequence belongs to the Spindly family. Interacts with KNTC1 and ZW10. These interactions appear weak and may be transient or indirect. Interacts with dynein intermediate chain and dynactin (DCTN1). Interacts with the catalytically active form of USP45. Monoubiquitinated with'Lys-48' linkage. Deubiquitinated by USP45.

The protein resides in the cytoplasm. It is found in the cytoskeleton. Its subcellular location is the microtubule organizing center. The protein localises to the centrosome. It localises to the chromosome. The protein resides in the centromere. It is found in the kinetochore. Its subcellular location is the nucleus. The protein localises to the spindle pole. Functionally, required for the localization of dynein and dynactin to the mitotic kintochore. Dynein is believed to control the initial lateral interaction between the kinetochore and spindle microtubules and to facilitate the subsequent formation of end-on kinetochore-microtubule attachments mediated by the NDC80 complex. Also required for correct spindle orientation. Does not appear to be required for the removal of spindle assembly checkpoint (SAC) proteins from the kinetochore upon bipolar spindle attachment. Acts as an adapter protein linking the dynein motor complex to various cargos and converts dynein from a non-processive to a highly processive motor in the presence of dynactin. Facilitates the interaction between dynein and dynactin and activates dynein processivity (the ability to move along a microtubule for a long distance without falling off the track). Plays a role in cell migration. The sequence is that of Protein Spindly from Bos taurus (Bovine).